Consider the following 894-residue polypeptide: Protein SEY1 (894 aa).

A disordered region spans residues 1–64 (MGLDVDSVPI…PRALEPAQVT (64 aa)). Residues 1–768 (MGLDVDSVPI…KRGTVSSMSQ (768 aa)) lie on the Cytoplasmic side of the membrane. A compositionally biased stretch (low complexity) spans 9–24 (PIAEAAAPSSMAATEP). Residues 40–53 (APMNTDSSRETMPT) show a composition bias toward polar residues. The GB1/RHD3-type G domain maps to 137-359 (GFGYDICAVL…DESYVFKTEY (223 aa)). GTP is bound at residue 147–154 (GSQSTGKS). Residues 536–559 (KVDDERAQLLDELHTLARTLRANE) adopt a coiled-coil conformation. The helical transmembrane segment at 769–789 (VPIWMYGVLVVLGWNEAMAVL) threads the bilayer. The Lumenal portion of the chain corresponds to 790–792 (RNP). The helical transmembrane segment at 793-813 (VYFTLLCMVLATAYVIWRLNL) threads the bilayer. Topologically, residues 814 to 894 (GTPVLALASG…DSHPRLPASF (81 aa)) are cytoplasmic. Positions 841 to 894 (DGTPPSANRAREYRVPSGSTAHVSEKTPHRPLTTSGAAEADTVEDSHPRLPASF) are disordered.

This sequence belongs to the TRAFAC class dynamin-like GTPase superfamily. GB1/RHD3 GTPase family. RHD3 subfamily.

It localises to the endoplasmic reticulum membrane. In terms of biological role, cooperates with the reticulon proteins and tubule-shaping DP1 family proteins to generate and maintain the structure of the tubular endoplasmic reticulum network. Has GTPase activity, which is required for its function in ER organization. The protein is Protein SEY1 of Malassezia globosa (strain ATCC MYA-4612 / CBS 7966) (Dandruff-associated fungus).